We begin with the raw amino-acid sequence, 308 residues long: Protoheme IX farnesyltransferase (308 aa).

The next 8 helical transmembrane spans lie at 31–51 (VIELLLVTAIPAMLLAQRGTV), 53–73 (PLLIVNTLIGGMLAAGGANAL), 102–122 (NALVFGLVLTAGSFLWLWWTT), 124–144 (LLSGLLALATIAFYVFIYTLL), 149–169 (TSQNVVWGGAAGCMPVMIGWS), 170–190 (AVTGTIQWPALVMFAIIFFWT), 240–260 (LALATGWLYAAVALVAGVWFL), and 288–308 (YLAVVFCALAIDSAIGLPHLF).

The protein belongs to the UbiA prenyltransferase family. Protoheme IX farnesyltransferase subfamily.

It localises to the cell membrane. It carries out the reaction heme b + (2E,6E)-farnesyl diphosphate + H2O = Fe(II)-heme o + diphosphate. Its pathway is porphyrin-containing compound metabolism; heme O biosynthesis; heme O from protoheme: step 1/1. Functionally, converts heme B (protoheme IX) to heme O by substitution of the vinyl group on carbon 2 of heme B porphyrin ring with a hydroxyethyl farnesyl side group. The polypeptide is Protoheme IX farnesyltransferase (Mycolicibacterium paratuberculosis (strain ATCC BAA-968 / K-10) (Mycobacterium paratuberculosis)).